The following is a 456-amino-acid chain: Protein odr-4 homolog (456 aa).

A compositionally biased stretch (low complexity) spans 374-401 (IESSKNNNNNNNNNNNNNNNNNNNNSKL). The tract at residues 374 to 403 (IESSKNNNNNNNNNNNNNNNNNNNNSKLSN) is disordered. Residues 436 to 456 (YLIIIISVLVLMVAFYFKFFV) traverse the membrane as a helical segment.

The protein belongs to the ODR-4 family.

The protein localises to the membrane. May play a role in the trafficking of a subset of G-protein coupled receptors. The polypeptide is Protein odr-4 homolog (Dictyostelium discoideum (Social amoeba)).